A 48-amino-acid polypeptide reads, in one-letter code: M-oxotoxin-Ot1c (48 aa).

It localises to the secreted. The protein localises to the target cell membrane. Disrupts cell membranes, particularly those rich in phosphocholine, through formation of pores. Has antimicrobial activity, hemolytic activity and insecticidal activity. The sequence is that of M-oxotoxin-Ot1c from Oxyopes takobius (Lynx spider).